The sequence spans 256 residues: Zinc import ATP-binding protein ZnuC (256 aa).

Residues 6 to 221 (IAAEGLSIRV…PEYRALFGTG (216 aa)) enclose the ABC transporter domain. Residue 38–45 (GPNGSGKS) coordinates ATP. The disordered stretch occupies residues 237 to 256 (HDDDCGHDHGAEHMHPHGDR).

The protein belongs to the ABC transporter superfamily. Zinc importer (TC 3.A.1.15.5) family. As to quaternary structure, the complex is composed of two ATP-binding proteins (ZnuC), two transmembrane proteins (ZnuB) and a solute-binding protein (ZnuA).

It is found in the cell inner membrane. The enzyme catalyses Zn(2+)(out) + ATP(in) + H2O(in) = Zn(2+)(in) + ADP(in) + phosphate(in) + H(+)(in). Functionally, part of the ABC transporter complex ZnuABC involved in zinc import. Responsible for energy coupling to the transport system. This Ruegeria pomeroyi (strain ATCC 700808 / DSM 15171 / DSS-3) (Silicibacter pomeroyi) protein is Zinc import ATP-binding protein ZnuC.